A 125-amino-acid chain; its full sequence is uncharacterized protein (125 aa).

This sequence to transposase of insertion sequence IS6501.

This is an uncharacterized protein from Sinorhizobium fredii (strain NBRC 101917 / NGR234).